The sequence spans 548 residues: ATP synthase subunit alpha (548 aa).

Position 172-179 (172-179 (GDRKTGKT)) interacts with ATP.

This sequence belongs to the ATPase alpha/beta chains family. F-type ATPases have 2 components, CF(1) - the catalytic core - and CF(0) - the membrane proton channel. CF(1) has five subunits: alpha(3), beta(3), gamma(1), delta(1), epsilon(1). CF(0) has three main subunits: a(1), b(2) and c(9-12). The alpha and beta chains form an alternating ring which encloses part of the gamma chain. CF(1) is attached to CF(0) by a central stalk formed by the gamma and epsilon chains, while a peripheral stalk is formed by the delta and b chains.

Its subcellular location is the cell membrane. The enzyme catalyses ATP + H2O + 4 H(+)(in) = ADP + phosphate + 5 H(+)(out). Functionally, produces ATP from ADP in the presence of a proton gradient across the membrane. The alpha chain is a regulatory subunit. This Mycolicibacterium smegmatis (strain ATCC 700084 / mc(2)155) (Mycobacterium smegmatis) protein is ATP synthase subunit alpha.